The sequence spans 590 residues: Myo-inositol transporter 3 (590 aa).

Positions 1–26 (MRTTHIEDRDNNSLENKHTDHIEGVE) are enriched in basic and acidic residues. Positions 1–40 (MRTTHIEDRDNNSLENKHTDHIEGVENGKGTQEPPSPSGF) are disordered. The Cytoplasmic segment spans residues 1 to 57 (MRTTHIEDRDNNSLENKHTDHIEGVENGKGTQEPPSPSGFGGHLIDENLVHVEGEDK). The helical transmembrane segment at 58 to 78 (VTWYLCFLISASAIAGFLFGY) threads the bilayer. Over 79 to 105 (DTGVVGVALPLVGTDLGGNELNSSQQE) the chain is Extracellular. Residue Asn-100 is glycosylated (N-linked (GlcNAc...) asparagine). The chain crosses the membrane as a helical span at residues 106-126 (IITAGTTIGAIFGSAILGGWG). The Cytoplasmic portion of the chain corresponds to 127-132 (DHLGRK). Residues 133 to 153 (MAILISDVFFTVGAVIIASSY) traverse the membrane as a helical segment. The Extracellular portion of the chain corresponds to 154 to 157 (SVPQ). A helical transmembrane segment spans residues 158–178 (IIVGRIVLGVGVGGAAVIAPL). Residues 179 to 192 (FITETAPTAVRGRC) are Cytoplasmic-facing. Residues 193-213 (IGVNAFFIPFGQLVADSIGAG) form a helical membrane-spanning segment. Over 214–222 (VQNMHGGWR) the chain is Extracellular. Residues 223–243 (LLFALGAVPSLIQLLLFHYLP) form a helical membrane-spanning segment. Residues 244–325 (ESPRILIVKG…AVSVLQAAGQ (82 aa)) lie on the Cytoplasmic side of the membrane. The helical transmembrane segment at 326-346 (LCGFNTLLYYAGTLFGLLGLS) threads the bilayer. The Extracellular segment spans residues 347-349 (NPA). A helical membrane pass occupies residues 350–370 (LGGLIPAGTNAVFVLIGMSTV). Residues 371–376 (DKIGRR) are Cytoplasmic-facing. The helical transmembrane segment at 377-397 (GLLLVGVPVLLLGLVWNIIGF) threads the bilayer. At 398-420 (YYMCKPTGGFLDTSYSYDTTNVG) the chain is on the extracellular side. Residues 421 to 441 (IVIGGIVFYVAGFGLTYSHLV) traverse the membrane as a helical segment. Topologically, residues 442–455 (WYQAEYLALEVRSM) are cytoplasmic. Residues 456–476 (GSGVATTVCWIANLVVSVSYL) traverse the membrane as a helical segment. Residues 477–485 (SELETMTPS) are Extracellular-facing. Residues 486-506 (GTYGFYLGLSVIAFVFVVFCF) form a helical membrane-spanning segment. Residues 507–590 (PETKQLSIDE…GGKRKPQVLV (84 aa)) are Cytoplasmic-facing.

Belongs to the major facilitator superfamily. Sugar transporter (TC 2.A.1.1) family.

The protein localises to the cell membrane. It carries out the reaction myo-inositol(out) + H(+)(out) = myo-inositol(in) + H(+)(in). Its function is as follows. Transporter for myo-inositol. The protein is Myo-inositol transporter 3 of Cryptococcus neoformans var. grubii serotype A (strain H99 / ATCC 208821 / CBS 10515 / FGSC 9487) (Filobasidiella neoformans var. grubii).